Consider the following 476-residue polypeptide: NADH-quinone oxidoreductase subunit N (476 aa).

13 helical membrane-spanning segments follow: residues Leu7 to Val27, Arg33 to Met53, Val59 to Val79, Gly100 to Gly120, Leu122 to Phe142, Tyr156 to Gly176, Leu199 to Phe219, Phe237 to Ala257, Trp265 to Ile285, Leu305 to Met325, Val363 to Phe383, Ile399 to Val419, and Val437 to Ile457.

It belongs to the complex I subunit 2 family. In terms of assembly, NDH-1 is composed of 14 different subunits. Subunits NuoA, H, J, K, L, M, N constitute the membrane sector of the complex.

The protein localises to the cell membrane. It catalyses the reaction a quinone + NADH + 5 H(+)(in) = a quinol + NAD(+) + 4 H(+)(out). Its function is as follows. NDH-1 shuttles electrons from NADH, via FMN and iron-sulfur (Fe-S) centers, to quinones in the respiratory chain. The immediate electron acceptor for the enzyme in this species is believed to be a menaquinone. Couples the redox reaction to proton translocation (for every two electrons transferred, four hydrogen ions are translocated across the cytoplasmic membrane), and thus conserves the redox energy in a proton gradient. In Moorella thermoacetica (strain ATCC 39073 / JCM 9320), this protein is NADH-quinone oxidoreductase subunit N.